The sequence spans 306 residues: NAD-dependent protein deacylase (306 aa).

One can recognise a Deacetylase sirtuin-type domain in the interval 1–305; it reads MNKQLKEFQE…PIALKPLIGD (305 aa). 23–42 serves as a coordination point for NAD(+); the sequence is GAGLSASSGLPTFRGSQGLW. 2 residues coordinate substrate: Tyr67 and Arg70. 103 to 106 contacts NAD(+); that stretch reads QNVD. The active-site Proton acceptor is the His123. Zn(2+) contacts are provided by Cys131, Cys136, Cys200, and Cys203. NAD(+) contacts are provided by residues 243–245, 269–271, and Ala291; these read GTS and NTD.

Belongs to the sirtuin family. Class III subfamily. It depends on Zn(2+) as a cofactor.

It localises to the mitochondrion. It catalyses the reaction N(6)-malonyl-L-lysyl-[protein] + NAD(+) + H2O = 2''-O-malonyl-ADP-D-ribose + nicotinamide + L-lysyl-[protein]. It carries out the reaction N(6)-succinyl-L-lysyl-[protein] + NAD(+) + H2O = 2''-O-succinyl-ADP-D-ribose + nicotinamide + L-lysyl-[protein]. The enzyme catalyses N(6)-glutaryl-L-lysyl-[protein] + NAD(+) + H2O = 2''-O-glutaryl-ADP-D-ribose + nicotinamide + L-lysyl-[protein]. Its function is as follows. NAD-dependent lysine demalonylase, desuccinylase and deglutarylase that specifically removes malonyl, succinyl and glutaryl groups on target proteins. Has weak NAD-dependent protein deacetylase activity; however this activity may not be physiologically relevant in vivo. This is NAD-dependent protein deacylase from Candida albicans (strain SC5314 / ATCC MYA-2876) (Yeast).